A 1385-amino-acid polypeptide reads, in one-letter code: DNA-directed RNA polymerase subunit beta (1385 aa).

Belongs to the RNA polymerase beta chain family. As to quaternary structure, the RNAP catalytic core consists of 2 alpha, 1 beta, 1 beta' and 1 omega subunit. When a sigma factor is associated with the core the holoenzyme is formed, which can initiate transcription.

The catalysed reaction is RNA(n) + a ribonucleoside 5'-triphosphate = RNA(n+1) + diphosphate. Its function is as follows. DNA-dependent RNA polymerase catalyzes the transcription of DNA into RNA using the four ribonucleoside triphosphates as substrates. In Jannaschia sp. (strain CCS1), this protein is DNA-directed RNA polymerase subunit beta.